We begin with the raw amino-acid sequence, 108 residues long: uncharacterized protein (108 aa).

The next 2 membrane-spanning stretches (helical) occupy residues 5–27 (TVYGLAYLFYSGINCILLYQLEI) and 83–105 (IFLMTSIIDIASFKAQVLFLNIF).

The protein localises to the membrane. This is an uncharacterized protein from Schizosaccharomyces pombe (strain 972 / ATCC 24843) (Fission yeast).